The sequence spans 639 residues: MVLTMASQDVQNFFQPLSSWLSRVYEALQQAGDALSASLVLLSKHDSALSDKPEQDLDAAQIQQTYLEDEEQDHDGSPEEASSLFLEEDHFSLSNSDLQDSVQTASPTLGQQAEDSSSVIPPWPSKIPGAPKPQPVLSSIAEEDHHSERQRCGRQHGSGTLEKVNGRKQVNSFGDDEEPSTSSESDEDVTKQFKISVSRSQSFRSGVSEKGKTTELEQKIKCKRLLCTHQEDSAEGSACEDLDRTSQLSYSEILSYEDRPISILPQSPFESRNVRHHGPCRPEMGMVRSLGRPCADGVLETETAFVSRGFEDSYATHSSSLWSPEEQDGTSLQVPHRLLEPISKCGDLDVIFEYRAVTQKLTVTIVRAQGLPDKDRSGVNSWQVHIVLLPSKKQRGKTNIQRGPNPVFKEKVTFTKLEPRDVASCAVRFRLYAARKMTRERMMGEKLFCLSHLHPEGEMKVTLVLEPRSNLSSGESPLSPSVVSHSDSASSTQSLSHGGVPELLVGLSYNATTGRLSVEMIKGSHFRNLAANRAPDTYGKLFLLNCVGQEMSRCKTSIRRGQPNPVYKETFVFQVALFQLSDVTLMISIYSRRTMKRKEMIGWVALGQNSSGEEEQEHWEEMKESKGQQTCRWHTLLES.

Over residues 95–119 (NSDLQDSVQTASPTLGQQAEDSSSV) the composition is skewed to polar residues. Residues 95–191 (NSDLQDSVQT…SSESDEDVTK (97 aa)) form a disordered region. Residues 121–134 (PPWPSKIPGAPKPQ) show a composition bias toward pro residues. The span at 142–151 (EEDHHSERQR) shows a compositional bias: basic and acidic residues. Acidic residues predominate over residues 174-187 (GDDEEPSTSSESDE). One can recognise a C2 1 domain in the interval 344 to 463 (KCGDLDVIFE…HPEGEMKVTL (120 aa)). The disordered stretch occupies residues 470 to 496 (NLSSGESPLSPSVVSHSDSASSTQSLS). Low complexity predominate over residues 476-496 (SPLSPSVVSHSDSASSTQSLS). Positions 499-634 (GVPELLVGLS…SKGQQTCRWH (136 aa)) constitute a C2 2 domain.

This sequence belongs to the synaptotagmin family. Homodimer. Can also form heterodimers. As to expression, highly expressed in heart and testis. Moderately expressed in kidney.

In terms of biological role, may be involved in the trafficking and exocytosis of secretory vesicles in non-neuronal tissues. Is Ca(2+)-independent. The protein is Synaptotagmin-16 (Syt16) of Mus musculus (Mouse).